The following is a 248-amino-acid chain: MRQVIIAGNWKMNASKEATNILVMDILSGMVDVKSKVIICVPFPYMAQVEALVGCSQLNLGAQDLNINKSGAFTGEVSVDMIKDFGARYVIVGHSERRSLYFENNEIVAQKVQVALNNNLTPLLCIGELLEDRDSGKTQEVVSEQIQAVIDLVGIDAFKDIIVAYEPVWAIGTGITATPQQAQDTHAFIRSMLAKYDDNVSQITSILYGGSMNPRNAAELMNCKDIDGGLIGGASLKAQDFLQICKAS.

Position 9–11 (9–11 (NWK)) interacts with substrate. His94 (electrophile) is an active-site residue. The active-site Proton acceptor is Glu166. Residues Gly172, Ser211, and 232 to 233 (GG) contribute to the substrate site.

Belongs to the triosephosphate isomerase family. As to quaternary structure, homodimer.

It is found in the cytoplasm. The catalysed reaction is D-glyceraldehyde 3-phosphate = dihydroxyacetone phosphate. The protein operates within carbohydrate biosynthesis; gluconeogenesis. Its pathway is carbohydrate degradation; glycolysis; D-glyceraldehyde 3-phosphate from glycerone phosphate: step 1/1. Involved in the gluconeogenesis. Catalyzes stereospecifically the conversion of dihydroxyacetone phosphate (DHAP) to D-glyceraldehyde-3-phosphate (G3P). The chain is Triosephosphate isomerase from Vesicomyosocius okutanii subsp. Calyptogena okutanii (strain HA).